A 435-amino-acid polypeptide reads, in one-letter code: Cyclic GMP-AMP synthase-like receptor (435 aa).

ATP is bound by residues Ser70 and 82-84 (EFD). Residues Glu82, Asp84, and Asp209 each contribute to the Mg(2+) site. Asp209 lines the GTP pocket. ATP contacts are provided by residues Lys286 and 300–304 (SYYVK). Residues Leu311, Asp312, and Asp317 each coordinate Mn(2+).

This sequence belongs to the mab-21 family. Requires Mg(2+) as cofactor. Mn(2+) is required as a cofactor.

The catalysed reaction is GTP + ATP = 2',3'-cGAMP + 2 diphosphate. It catalyses the reaction GTP + ATP = pppGp(2'-5')A + diphosphate. It carries out the reaction pppGp(2'-5')A = 2',3'-cGAMP + diphosphate. Nucleotidyltransferase that catalyzes the formation of cyclic GMP-AMP (2',3'-cGAMP) from ATP and GTP and plays a key role in innate immunity. Directly binds some unknown ligand, activating the nucleotidyltransferase activity, leading to synthesis of 2',3'-cGAMP, a second messenger that binds to and activates Sting, thereby triggering the immune response via activation of the NF-kappa-B transcription factor. This chain is Cyclic GMP-AMP synthase-like receptor, found in Ctenocephalides felis (Cat flea).